The following is a 208-amino-acid chain: N-(5'-phosphoribosyl)anthranilate isomerase (208 aa).

Belongs to the TrpF family.

It catalyses the reaction N-(5-phospho-beta-D-ribosyl)anthranilate = 1-(2-carboxyphenylamino)-1-deoxy-D-ribulose 5-phosphate. Its pathway is amino-acid biosynthesis; L-tryptophan biosynthesis; L-tryptophan from chorismate: step 3/5. This chain is N-(5'-phosphoribosyl)anthranilate isomerase, found in Methanococcus maripaludis (strain C7 / ATCC BAA-1331).